The following is a 587-amino-acid chain: Serine/threonine-protein phosphatase 2A 65 kDa regulatory subunit A gamma isoform (587 aa).

At Ser2 the chain carries N-acetylserine. 14 HEAT repeats span residues 2 to 42, 44 to 80, 81 to 119, 158 to 194, 197 to 235, 236 to 274, 276 to 313, 314 to 352, 353 to 391, 393 to 430, 432 to 469, 470 to 508, 509 to 547, and 549 to 586; these read SMVD…ALGE, RTRKELIPFLSENNDDDDEVLLAMAEELGGFILYVGG, VEYAYVLLPPLETLSTVEETCVREKAVDSLCRIGAQMRE, DVLKTELRSIYGQLCQDDMPMVRRAAATNLGKFAATI, AHLKTDIMSMFEDLTQDDQDSVRLLAVEGCAALGKLLEP, QDCVAHILPVIVNFSQDKSWRVRYMVANQLYELCEAVGP, PTRTDLVPAYARLLCDNEAEVRIAAAGKVTKFCRILNP, ELAIQHILPCVKELSSDSSQHVRSALASVIMGMAPVLGK, DATIEHLLPIFLSLLKDEFPDVRLNIISKLDQVNQVIGI, LLSQSLLPAIVELAEDRHWRVRLAIIEYIPLLASQLGV, FFDEKLGALCMQWLQDKVHSIREAAANNLKRLAEEFGP, EWAMQHIVPQVLEMINNPHYLYRMTILRAVSLLAPVMGS, EITCSKLLPAVITASKDRVPNIKFNVAKMMQSLIPIVDQ, and VVENMIRPCLVELSEDPDVDVRYFANQALQSIDNVMMS.

The protein belongs to the phosphatase 2A regulatory subunit A family. In terms of assembly, PP2A consists of a common heterodimeric core enzyme, composed of a 36 kDa catalytic subunit (subunit C) and a 65 kDa constant regulatory subunit (subunit A), that associates with a variety of regulatory subunits such as subunits B (the R2/B/PR55/B55, R3/B''/PR72/PR130/PR59 and R5/B'/B56 families). Interacts with CHIP. Interacts with SRK2E/OST1. In terms of processing, ubiquitinated. CHIP-mediated ubiquitination enhances phosphatase activity after an abiotic stress such as low temperature or darkness. In terms of tissue distribution, expressed ubiquitously at stable levels. However, higher protein levels in roots and flowers (at protein level).

The protein localises to the cytoplasm. Its subcellular location is the cytosol. It localises to the nucleus. Functionally, the A subunit of protein phosphatase 2A serves as a scaffolding molecule to coordinate the assembly of the catalytic subunit and a variable regulatory B subunit. Involved during developmental process such as seedling and floral developments. Seems to act as a negative regulator of PP2A catalytic activity. This chain is Serine/threonine-protein phosphatase 2A 65 kDa regulatory subunit A gamma isoform (PP2AA3), found in Arabidopsis thaliana (Mouse-ear cress).